Consider the following 218-residue polypeptide: 3,4-dihydroxy-2-butanone 4-phosphate synthase (218 aa).

D-ribulose 5-phosphate is bound by residues 38-39, aspartate 43, 151-155, and glutamate 175; these read RE and RRGHT. A Mg(2+)-binding site is contributed by glutamate 39. Mg(2+) is bound at residue histidine 154.

It belongs to the DHBP synthase family. In terms of assembly, homodimer. The cofactor is Mg(2+). Mn(2+) is required as a cofactor.

It catalyses the reaction D-ribulose 5-phosphate = (2S)-2-hydroxy-3-oxobutyl phosphate + formate + H(+). It participates in cofactor biosynthesis; riboflavin biosynthesis; 2-hydroxy-3-oxobutyl phosphate from D-ribulose 5-phosphate: step 1/1. Functionally, catalyzes the conversion of D-ribulose 5-phosphate to formate and 3,4-dihydroxy-2-butanone 4-phosphate. This chain is 3,4-dihydroxy-2-butanone 4-phosphate synthase, found in Shewanella frigidimarina (strain NCIMB 400).